We begin with the raw amino-acid sequence, 289 residues long: ATP phosphoribosyltransferase (289 aa).

Belongs to the ATP phosphoribosyltransferase family. Long subfamily. It depends on Mg(2+) as a cofactor.

It is found in the cytoplasm. The enzyme catalyses 1-(5-phospho-beta-D-ribosyl)-ATP + diphosphate = 5-phospho-alpha-D-ribose 1-diphosphate + ATP. Its pathway is amino-acid biosynthesis; L-histidine biosynthesis; L-histidine from 5-phospho-alpha-D-ribose 1-diphosphate: step 1/9. Its activity is regulated as follows. Feedback inhibited by histidine. In terms of biological role, catalyzes the condensation of ATP and 5-phosphoribose 1-diphosphate to form N'-(5'-phosphoribosyl)-ATP (PR-ATP). Has a crucial role in the pathway because the rate of histidine biosynthesis seems to be controlled primarily by regulation of HisG enzymatic activity. This Pelotomaculum thermopropionicum (strain DSM 13744 / JCM 10971 / SI) protein is ATP phosphoribosyltransferase.